The sequence spans 367 residues: C-glycoside deglycosidase alpha subunit (367 aa).

Glu146 serves as a coordination point for Mg(2+). The active-site Proton acceptor is the His148. Positions 178, 276, and 312 each coordinate Mg(2+).

This sequence belongs to the C-glycoside deglycosidase alpha subunit family. As to quaternary structure, heterodimer composed of an alpha subunit (CarB1) and a beta subunit (CarC1). It depends on Mg(2+) as a cofactor.

The catalysed reaction is 3''-dehydroisovitexin = 1,5-anhydro-D-erythro-hex-1-en-3-ulose + apigenin. Activity is strongly reduced in the presence of chelating agents. In terms of biological role, carbon-carbon bond-cleaving enzyme which participates in the metabolism of C-glycosides. Acts on the C6-glycosylated compound 3''-dehydroisovitexin (3''-oxo-isovitexin). Shows weak activity with 3''-dehydroisoorientin (3''-oxo-homoorientin) and 3'-dehydromangiferin (3'-oxo-mangiferin). The polypeptide is C-glycoside deglycosidase alpha subunit (Arthrobacter globiformis (strain ATCC 8010 / DSM 20124 / JCM 1332 / NBRC 12137 / NCIMB 8907 / NRRL B-2979 / 168)).